Reading from the N-terminus, the 452-residue chain is Cysteine--tRNA ligase (452 aa).

Cysteine 27 lines the Zn(2+) pocket. The short motif at 29-39 (PTVQDHFHIGH) is the 'HIGH' region element. Residues aspartate 207, histidine 232, and glutamate 236 each coordinate Zn(2+). The short motif at 265–269 (KMSKS) is the 'KMSKS' region element. Residue lysine 268 participates in ATP binding.

The protein belongs to the class-I aminoacyl-tRNA synthetase family. Zn(2+) serves as cofactor.

It is found in the cytoplasm. The enzyme catalyses tRNA(Cys) + L-cysteine + ATP = L-cysteinyl-tRNA(Cys) + AMP + diphosphate. The sequence is that of Cysteine--tRNA ligase from Thermoplasma acidophilum (strain ATCC 25905 / DSM 1728 / JCM 9062 / NBRC 15155 / AMRC-C165).